We begin with the raw amino-acid sequence, 427 residues long: Glutamate-1-semialdehyde 2,1-aminomutase (427 aa).

Lys-267 bears the N6-(pyridoxal phosphate)lysine mark.

The protein belongs to the class-III pyridoxal-phosphate-dependent aminotransferase family. HemL subfamily. As to quaternary structure, homodimer. Pyridoxal 5'-phosphate is required as a cofactor.

It is found in the cytoplasm. It catalyses the reaction (S)-4-amino-5-oxopentanoate = 5-aminolevulinate. The protein operates within porphyrin-containing compound metabolism; protoporphyrin-IX biosynthesis; 5-aminolevulinate from L-glutamyl-tRNA(Glu): step 2/2. This chain is Glutamate-1-semialdehyde 2,1-aminomutase, found in Syntrophotalea carbinolica (strain DSM 2380 / NBRC 103641 / GraBd1) (Pelobacter carbinolicus).